A 97-amino-acid chain; its full sequence is uncharacterized protein (97 aa).

The N-terminal stretch at 1–16 (MKQTVLLLFTALFLSG) is a signal peptide. The N-palmitoyl cysteine moiety is linked to residue Cys-17. Residue Cys-17 is the site of S-diacylglycerol cysteine attachment.

The protein localises to the cell membrane. This is an uncharacterized protein from Bacillus subtilis (strain 168).